A 360-amino-acid chain; its full sequence is Protein Wnt-2 (360 aa).

A signal peptide spans 1–37 (MIPRRSCWLILLLNLLNVQSLLDASWWSTVAQLSTAL). 11 disulfides stabilise this stretch: cysteine 80-cysteine 91, cysteine 130-cysteine 138, cysteine 140-cysteine 158, cysteine 213-cysteine 227, cysteine 215-cysteine 222, cysteine 289-cysteine 320, cysteine 305-cysteine 315, cysteine 319-cysteine 359, cysteine 335-cysteine 350, cysteine 337-cysteine 347, and cysteine 342-cysteine 343. N-linked (GlcNAc...) asparagine glycosylation is present at asparagine 90. Serine 219 carries the O-palmitoleoyl serine; by mom-1 lipid modification. Asparagine 352 carries an N-linked (GlcNAc...) asparagine glycan.

The protein belongs to the Wnt family. In terms of processing, palmitoleoylation is required for efficient binding to frizzled receptors. Depalmitoleoylation leads to Wnt signaling pathway inhibition. In terms of tissue distribution, expressed in intestine, pharynx, anterior body wall muscle, vulva, some pharyngeal neurons and SMD head neurons. Expressed along the boundary between the intestine and muscle or hypodermis, but is also expressed in the hypodermis in cells including seam cells.

It is found in the secreted. The protein resides in the extracellular space. The protein localises to the extracellular matrix. In terms of biological role, ligand for members of the frizzled family of seven transmembrane receptors. Probable developmental protein. May be a signaling molecule which affects the development of discrete regions of tissues. Is likely to signal over only few cell diameters. Involved in the correct positioning of the developing nerve ring and in axon guidance of SIA and SIB neurons, probably by binding to tyrosine kinase receptor cam-1. In addition, regulates the positioning of some head neuronal cells, muscle arms associated with the nerve ring and the excretory pore. Together with Wnt ligand cwn-1, regulates the migration of CAN, ALM, BDU and HSN neurons during embryogenesis, the migration of QL and QR neuroblast descendants during larval development, and polarity of ALM neurons. May act through the wnt receptor cfz-2 to regulate QR neuroblast descendant migration, and to direct ALM migration. Also plays a role in axon growth and guidance in HSN and male CP neurons. In addition, together with wnt ligand cwn-1, negatively regulates developmental neurite pruning of AIM neurons probably by acting as a ligand for receptor tyrosine kinase cam-1. Through the cam-1 receptor also probably regulates the outgrowth of neurites from RME GABAergic motor neurons. May act redundantly with other Wnt ligands such as cwn-1 and mom-2 to control seam cell polarity. This is Protein Wnt-2 from Caenorhabditis elegans.